A 95-amino-acid chain; its full sequence is Exodeoxyribonuclease 7 small subunit (95 aa).

Belongs to the XseB family. Heterooligomer composed of large and small subunits.

It is found in the cytoplasm. It carries out the reaction Exonucleolytic cleavage in either 5'- to 3'- or 3'- to 5'-direction to yield nucleoside 5'-phosphates.. Functionally, bidirectionally degrades single-stranded DNA into large acid-insoluble oligonucleotides, which are then degraded further into small acid-soluble oligonucleotides. This Corynebacterium aurimucosum (strain ATCC 700975 / DSM 44827 / CIP 107346 / CN-1) (Corynebacterium nigricans) protein is Exodeoxyribonuclease 7 small subunit.